A 648-amino-acid polypeptide reads, in one-letter code: Macrolide export ATP-binding/permease protein MacB (648 aa).

The region spanning 5-243 is the ABC transporter domain; the sequence is LELCNVSRSY…QGVDAAVVNT (239 aa). 41–48 serves as a coordination point for ATP; sequence GVSGSGKS. 5 helical membrane-spanning segments follow: residues 273–293, 417–437, 523–543, 577–597, and 611–631; these read LLTM…VVVG, ANVV…IGVA, LFLT…VMNI, VLVC…IAFM, and LTAL…FGWL.

The protein belongs to the ABC transporter superfamily. Macrolide exporter (TC 3.A.1.122) family. Homodimer. Part of the tripartite efflux system MacAB-TolC, which is composed of an inner membrane transporter, MacB, a periplasmic membrane fusion protein, MacA, and an outer membrane component, TolC. The complex forms a large protein conduit and can translocate molecules across both the inner and outer membranes. Interacts with MacA.

The protein localises to the cell inner membrane. Functionally, part of the tripartite efflux system MacAB-TolC. MacB is a non-canonical ABC transporter that contains transmembrane domains (TMD), which form a pore in the inner membrane, and an ATP-binding domain (NBD), which is responsible for energy generation. Confers resistance against macrolides. The chain is Macrolide export ATP-binding/permease protein MacB from Salmonella typhi.